Reading from the N-terminus, the 476-residue chain is Bifunctional protein HldE (476 aa).

The tract at residues M1–S319 is ribokinase. Residue N195–E198 coordinates ATP. D264 is an active-site residue. The interval M345–Q476 is cytidylyltransferase.

It in the N-terminal section; belongs to the carbohydrate kinase PfkB family. In the C-terminal section; belongs to the cytidylyltransferase family. In terms of assembly, homodimer.

The enzyme catalyses D-glycero-beta-D-manno-heptose 7-phosphate + ATP = D-glycero-beta-D-manno-heptose 1,7-bisphosphate + ADP + H(+). It catalyses the reaction D-glycero-beta-D-manno-heptose 1-phosphate + ATP + H(+) = ADP-D-glycero-beta-D-manno-heptose + diphosphate. It functions in the pathway nucleotide-sugar biosynthesis; ADP-L-glycero-beta-D-manno-heptose biosynthesis; ADP-L-glycero-beta-D-manno-heptose from D-glycero-beta-D-manno-heptose 7-phosphate: step 1/4. It participates in nucleotide-sugar biosynthesis; ADP-L-glycero-beta-D-manno-heptose biosynthesis; ADP-L-glycero-beta-D-manno-heptose from D-glycero-beta-D-manno-heptose 7-phosphate: step 3/4. In terms of biological role, catalyzes the phosphorylation of D-glycero-D-manno-heptose 7-phosphate at the C-1 position to selectively form D-glycero-beta-D-manno-heptose-1,7-bisphosphate. Functionally, catalyzes the ADP transfer from ATP to D-glycero-beta-D-manno-heptose 1-phosphate, yielding ADP-D-glycero-beta-D-manno-heptose. The polypeptide is Bifunctional protein HldE (Shewanella sp. (strain ANA-3)).